The following is a 3503-amino-acid chain: Protein dachsous (3503 aa).

A signal peptide spans 1–20 (MLRSSLLILLAIVLLGSSQA). Residues 21–3045 (ASHDQERERK…SSSGSIGDWA (3025 aa)) lie on the Extracellular side of the membrane. 14 Cadherin domains span residues 22–121 (SHDQ…APTF), 122–233 (PQTS…QPIF), 234–340 (NQSR…QPTI), 345–451 (LSDD…PPEF), 452–558 (EQDL…EPIF), 559–662 (DQSF…RPVF), 663–774 (YPRE…PPIF), 775–878 (EKAR…APEF), 879–983 (EASM…PPVF), 984–1100 (EKDE…DPKF), 1101–1203 (QKSK…APEI), 1205–1312 (DPQE…RPTF), 1313–1432 (TSSS…APEW), and 1433–1549 (PQDP…APHF). 2 N-linked (GlcNAc...) asparagine glycosylation sites follow: N220 and N234. S236 is modified (phosphoserine). N-linked (GlcNAc...) asparagine glycans are attached at residues N245, N381, and N416. 3 N-linked (GlcNAc...) asparagine glycosylation sites follow: N564, N594, and N743. N-linked (GlcNAc...) asparagine glycans are attached at residues N966, N991, N1006, N1029, N1143, and N1236. N-linked (GlcNAc...) asparagine glycans are attached at residues N1453, N1479, N1524, and N1553. 13 Cadherin domains span residues 1556–1666 (GGKT…PPRF), 1667–1794 (LQAV…SPEF), 1796–1899 (PGSC…APRF), 1900–2004 (KLSK…RPIF), 2005–2111 (ERYP…TPVL), 2114–2269 (QNET…SPKF), 2270–2375 (SQKQ…QPTF), 2375–2479 (FPPN…APVF), 2489–2595 (AILP…RSQF), 2596–2699 (LQNQ…FPIF), 2701–2809 (RSAK…EPKF), 2810–2916 (PLTE…TPQF), and 2919–3028 (RTYR…HPGT). N-linked (GlcNAc...) asparagine glycans are attached at residues N1700, N1884, and N1940. N2115 carries N-linked (GlcNAc...) asparagine glycosylation. Residues 2193–2225 (GRALHYEEEIDESSEEDPNNSTRSQRALTSSSF) form a disordered region. Residues 2200 to 2210 (EEIDESSEEDP) show a composition bias toward acidic residues. N-linked (GlcNAc...) asparagine glycans are attached at residues N2211 and N2212. Residues 2211–2225 (NNSTRSQRALTSSSF) show a composition bias toward polar residues. N2421, N2511, N2520, N2547, N2588, and N2678 each carry an N-linked (GlcNAc...) asparagine glycan. 2 N-linked (GlcNAc...) asparagine glycosylation sites follow: N2845 and N2967. The helical transmembrane segment at 3046-3066 (IGLLVAFLLVLCAAAGIFLFI) threads the bilayer. Residues 3067-3503 (HMRSRKPRNA…SQRGNVGTRM (437 aa)) lie on the Cytoplasmic side of the membrane. 3 disordered regions span residues 3114-3195 (AGAA…GRIS), 3360-3404 (LSEH…IPPP), and 3431-3503 (LPRS…GTRM). 2 stretches are compositionally biased toward low complexity: residues 3133 to 3159 (GAHA…SGRG) and 3363 to 3372 (HSGSGASSSA). The span at 3391 to 3404 (KPPPSAPPTHIPPP) shows a compositional bias: pro residues. A compositionally biased stretch (low complexity) spans 3440 to 3463 (ASGSFSTSSAMSPSFSPSLSPLAT). S3465 and S3469 each carry phosphoserine. Residues 3492-3503 (QPSQRGNVGTRM) are compositionally biased toward polar residues.

As to quaternary structure, interacts (via cytoplasmic region) with Myo31DF. In terms of processing, phosphorylated by fj on Ser/Thr of cadherin domains. In terms of tissue distribution, expressed in embryonic ectoderm. In larvae, expression is restricted to imaginal disks and brain.

The protein resides in the cell membrane. It is found in the cell junction. Required for normal morphogenesis of adult structures derived from imaginal disks. Plays a role in planar cell polarity and in determining body left-right asymmetry. Expression in segment H1 of the imaginal ring and interaction with Myo31DF are required to induce changes of cell shape and orientation in segment H2, which then gives rise to normal, dextral looping of the adult hindgut. The sequence is that of Protein dachsous (ds) from Drosophila melanogaster (Fruit fly).